Reading from the N-terminus, the 1392-residue chain is FERM and PDZ domain-containing protein 2 (1392 aa).

Positions 15–197 (VTLASALQVR…SEVERRVVEE (183 aa)) constitute a KIND domain. Positions 211–246 (SRLHQADGESPGAPASDALQPRRVSERSAETQSSLE) are disordered. Residues 342-642 (CVVLLNGRCL…WFNAQTGSKH (301 aa)) enclose the FERM domain. The PDZ 1 domain maps to 775 to 861 (GLFGEPNQDI…MAVRMIQNSP (87 aa)). Positions 903–930 (GRQSPHIHDQDRSVRGTEMAQGAGSCPP) are disordered. Basic and acidic residues predominate over residues 908-917 (HIHDQDRSVR). The tract at residues 937–1027 (TGEIYFVELV…VARLVLERRG (91 aa)) is interaction with GRIN2A and GRIN2B. PDZ domains lie at 950–1035 (GTLG…PQCP) and 1079–1167 (RGLG…PEME). The disordered stretch occupies residues 1186 to 1236 (CAGSEQSPSLDQEDNWRDSTSLDAGEGLSPGPESSYKDVRQVKGDREKERP). Basic and acidic residues predominate over residues 1220–1236 (SYKDVRQVKGDREKERP).

As to quaternary structure, interacts (via the second PDZ domain) with CTNND2 (via the extreme C-terminus). Interacts (via the second PDZ domain) with PKP4 (via the extreme C-terminus); the interaction directs FRMPD2 to the basolateral membranes. Interacts (via the second PDZ domain) with ARVCF (via the extreme C-terminus). Interacts (via the second PDZ domain) with NMDAR subunits GRIN2A/GLUN2A and GRIN2B/GLUN2B (via the extreme C-terminus); the interaction is direct and is likely to promote NMDAR-mediated neural signal transmission. Binds GRIN2A with lower affinity than GRIN2B. Interacts (via the third PDZ domain) with LRIT1 (via the extreme C-terminus); the interaction leads to their colocalization in photoreceptor synapses. Interacts with NOD2; the interaction is likely to trigger NOD2-mediated nuclear factor kappaB activation.

It localises to the cytoplasm. It is found in the postsynaptic density. Its subcellular location is the basolateral cell membrane. The protein localises to the cell junction. The protein resides in the tight junction. Functionally, functions as a scaffold protein and likely plays a role in N-methyl-D-aspartic acid receptor (NMDAR)-mediated synaptic excitatory transmission. May be involved in synapse formation in cone photoreceptor cells. May play a role in the regulation of tight junction formation. Binds phosphatidylinositol 3,4-bisphosphate (PtdIns(3,4)P2). May pNF-kappa-Blay a role in the regulation of NOD2-mediated NF-kappa-B activation in immune response. The sequence is that of FERM and PDZ domain-containing protein 2 from Mus musculus (Mouse).